A 572-amino-acid chain; its full sequence is Mitochondrial chaperone TCM62 (572 aa).

Residues methionine 1–cysteine 16 constitute a mitochondrion transit peptide. Over serine 17–lysine 471 the chain is Mitochondrial matrix. A helical membrane pass occupies residues valine 472–alanine 488. Topologically, residues phenylalanine 489 to alanine 572 are mitochondrial intermembrane.

Belongs to the chaperonin (HSP60) family. In terms of assembly, forms a high molecular mass protein complex of approximately 850 kDa.

The protein localises to the mitochondrion inner membrane. Chaperone. Required for the assembly of succinate dehydrogenase subunits. Ensures mitochondrial gene expression at elevated temperatures and prevents heat-aggregation of the ribosomal subunit VAR1. This chain is Mitochondrial chaperone TCM62 (TCM62), found in Saccharomyces cerevisiae (strain YJM789) (Baker's yeast).